Reading from the N-terminus, the 86-residue chain is Small ribosomal subunit protein uS15 (86 aa).

This sequence belongs to the universal ribosomal protein uS15 family. As to quaternary structure, part of the 30S ribosomal subunit. Forms a bridge to the 50S subunit in the 70S ribosome, contacting the 23S rRNA.

One of the primary rRNA binding proteins, it binds directly to 16S rRNA where it helps nucleate assembly of the platform of the 30S subunit by binding and bridging several RNA helices of the 16S rRNA. Functionally, forms an intersubunit bridge (bridge B4) with the 23S rRNA of the 50S subunit in the ribosome. This Vesicomyosocius okutanii subsp. Calyptogena okutanii (strain HA) protein is Small ribosomal subunit protein uS15.